A 693-amino-acid polypeptide reads, in one-letter code: Elongation factor G 1 (693 aa).

One can recognise a tr-type G domain in the interval 4–281; sequence NKLRNIGISA…AVTRFLPSPH (278 aa). GTP-binding positions include 13-20, 80-84, and 134-137; these read AHIDSGKT, DTPGH, and NKCD.

Belongs to the TRAFAC class translation factor GTPase superfamily. Classic translation factor GTPase family. EF-G/EF-2 subfamily.

The protein resides in the cytoplasm. In terms of biological role, catalyzes the GTP-dependent ribosomal translocation step during translation elongation. During this step, the ribosome changes from the pre-translocational (PRE) to the post-translocational (POST) state as the newly formed A-site-bound peptidyl-tRNA and P-site-bound deacylated tRNA move to the P and E sites, respectively. Catalyzes the coordinated movement of the two tRNA molecules, the mRNA and conformational changes in the ribosome. The sequence is that of Elongation factor G 1 from Borrelia garinii subsp. bavariensis (strain ATCC BAA-2496 / DSM 23469 / PBi) (Borreliella bavariensis).